Consider the following 169-residue polypeptide: Protein yop1 (169 aa).

Over 1 to 35 (MASFQDRAQHTIAQLDKELSKYPVLNNLERQTSVP) the chain is Cytoplasmic. A helical membrane pass occupies residues 36–55 (KVYVILGLVGIYTFLVFFNI). Residue alanine 56 is a topological domain, lumenal. Residues 57–76 (GEFLVNFAGFLIPGYYSLNA) traverse the membrane as a helical segment. Residues 77–86 (LFTSGKADDT) lie on the Cytoplasmic side of the membrane. Residues 87-103 (QWLTYWVVYALLTVVES) traverse the membrane as a helical segment. The Lumenal portion of the chain corresponds to 104 to 105 (AI). The helical transmembrane segment at 106–124 (NAAYWFPFYYIFKFVLILW) threads the bilayer. Residues 125–169 (MSLPQTNGAQVVFHSFLQPVLGRFFTSGSTSANLRAQADAASKSQ) are Cytoplasmic-facing.

This sequence belongs to the DP1 family. Oligomer.

It localises to the endoplasmic reticulum membrane. It is found in the golgi apparatus membrane. Its function is as follows. Required to generate and maintain the structure of the tubular endoplasmic reticulum network and the vacuole. Induces high curvature in membranes and causes membrane tubule formation. Involved in membrane/vesicle trafficking. In Aspergillus fumigatus (strain ATCC MYA-4609 / CBS 101355 / FGSC A1100 / Af293) (Neosartorya fumigata), this protein is Protein yop1 (yop1).